The sequence spans 364 residues: UDP-N-acetylglucosamine--N-acetylmuramyl-(pentapeptide) pyrophosphoryl-undecaprenol N-acetylglucosamine transferase (364 aa).

Residues 16-18 (TGG), Asn-128, Arg-166, Ser-195, Ile-249, and Gln-294 contribute to the UDP-N-acetyl-alpha-D-glucosamine site.

The protein belongs to the glycosyltransferase 28 family. MurG subfamily.

It is found in the cell inner membrane. The catalysed reaction is di-trans,octa-cis-undecaprenyl diphospho-N-acetyl-alpha-D-muramoyl-L-alanyl-D-glutamyl-meso-2,6-diaminopimeloyl-D-alanyl-D-alanine + UDP-N-acetyl-alpha-D-glucosamine = di-trans,octa-cis-undecaprenyl diphospho-[N-acetyl-alpha-D-glucosaminyl-(1-&gt;4)]-N-acetyl-alpha-D-muramoyl-L-alanyl-D-glutamyl-meso-2,6-diaminopimeloyl-D-alanyl-D-alanine + UDP + H(+). It functions in the pathway cell wall biogenesis; peptidoglycan biosynthesis. Cell wall formation. Catalyzes the transfer of a GlcNAc subunit on undecaprenyl-pyrophosphoryl-MurNAc-pentapeptide (lipid intermediate I) to form undecaprenyl-pyrophosphoryl-MurNAc-(pentapeptide)GlcNAc (lipid intermediate II). In Chromohalobacter salexigens (strain ATCC BAA-138 / DSM 3043 / CIP 106854 / NCIMB 13768 / 1H11), this protein is UDP-N-acetylglucosamine--N-acetylmuramyl-(pentapeptide) pyrophosphoryl-undecaprenol N-acetylglucosamine transferase.